The chain runs to 224 residues: PKHD-type hydroxylase Sbal_3634 (224 aa).

The 99-residue stretch at 78–176 folds into the Fe2OG dioxygenase domain; sequence QFYPPLFNRY…RTAAFMWLQS (99 aa). His-96, Asp-98, and His-157 together coordinate Fe cation. Arg-167 contacts 2-oxoglutarate.

It depends on Fe(2+) as a cofactor. L-ascorbate serves as cofactor.

This Shewanella baltica (strain OS155 / ATCC BAA-1091) protein is PKHD-type hydroxylase Sbal_3634.